We begin with the raw amino-acid sequence, 381 residues long: Succinate--CoA ligase [ADP-forming] subunit beta (381 aa).

In terms of domain architecture, ATP-grasp spans 9–236; it reads KELLRVAGVP…ESSEAPSEVD (228 aa). ATP-binding positions include Lys45, 52–54, Ala94, and Glu99; that span reads GRG. Asn191 and Asp205 together coordinate Mg(2+). Residues Asn256 and 313-315 each bind substrate; that span reads GIT.

Belongs to the succinate/malate CoA ligase beta subunit family. As to quaternary structure, heterotetramer of two alpha and two beta subunits. It depends on Mg(2+) as a cofactor.

It carries out the reaction succinate + ATP + CoA = succinyl-CoA + ADP + phosphate. It catalyses the reaction GTP + succinate + CoA = succinyl-CoA + GDP + phosphate. Its pathway is carbohydrate metabolism; tricarboxylic acid cycle; succinate from succinyl-CoA (ligase route): step 1/1. Its function is as follows. Succinyl-CoA synthetase functions in the citric acid cycle (TCA), coupling the hydrolysis of succinyl-CoA to the synthesis of either ATP or GTP and thus represents the only step of substrate-level phosphorylation in the TCA. The beta subunit provides nucleotide specificity of the enzyme and binds the substrate succinate, while the binding sites for coenzyme A and phosphate are found in the alpha subunit. The sequence is that of Succinate--CoA ligase [ADP-forming] subunit beta from Gemmatimonas aurantiaca (strain DSM 14586 / JCM 11422 / NBRC 100505 / T-27).